Consider the following 719-residue polypeptide: Serine/threonine-protein kinase CBK1 (719 aa).

2 disordered regions span residues 1 to 75 (MFGQ…GAGF) and 100 to 219 (MQQQ…QTSG). The segment covering 24 to 38 (QFSSAYMEQQGSHQS) has biased composition (polar residues). Residues 40–63 (QEHLAYEQLQLQQQQQQQQQHAAA) show a composition bias toward low complexity. Polar residues-rich tracts occupy residues 112-130 (ATSIYSQNNNSFTNVNDTT), 139-157 (GHYSNSSDYSGQQPASSAY), and 181-219 (GDQTLVGNQSSQGAMLSRQSLQCSSVPQSPNGGQRQTSG). In terms of domain architecture, Protein kinase spans 310-631 (FHTVKVIGKG…ANEIKNHPFF (322 aa)). ATP contacts are provided by residues 316–324 (IGKGAFGEV) and Lys-339. The Proton acceptor role is filled by Asp-433. One can recognise an AGC-kinase C-terminal domain in the interval 632-717 (RGVDWETIRQ…SRFDYLTRKN (86 aa)).

Belongs to the protein kinase superfamily. STE Ser/Thr protein kinase family. COT1 subfamily.

The enzyme catalyses L-seryl-[protein] + ATP = O-phospho-L-seryl-[protein] + ADP + H(+). The catalysed reaction is L-threonyl-[protein] + ATP = O-phospho-L-threonyl-[protein] + ADP + H(+). Functionally, protein kinase that seems to play a role in the regulation of cell morphogenesis and proliferation. In Eremothecium gossypii (strain ATCC 10895 / CBS 109.51 / FGSC 9923 / NRRL Y-1056) (Yeast), this protein is Serine/threonine-protein kinase CBK1 (CBK1).